Consider the following 137-residue polypeptide: uncharacterized protein (137 aa).

This is an uncharacterized protein from Rickettsia prowazekii (strain Madrid E).